Here is a 447-residue protein sequence, read N- to C-terminus: N-succinylarginine dihydrolase (447 aa).

Residues 19-28 (AGLSFGNEAS), asparagine 110, and 137-138 (HR) each bind substrate. Residue glutamate 174 is part of the active site. Arginine 212 contributes to the substrate binding site. The active site involves histidine 248. Positions 250 and 359 each coordinate substrate. Cysteine 365 serves as the catalytic Nucleophile.

The protein belongs to the succinylarginine dihydrolase family. In terms of assembly, homodimer.

The enzyme catalyses N(2)-succinyl-L-arginine + 2 H2O + 2 H(+) = N(2)-succinyl-L-ornithine + 2 NH4(+) + CO2. The protein operates within amino-acid degradation; L-arginine degradation via AST pathway; L-glutamate and succinate from L-arginine: step 2/5. Catalyzes the hydrolysis of N(2)-succinylarginine into N(2)-succinylornithine, ammonia and CO(2). This chain is N-succinylarginine dihydrolase, found in Salmonella heidelberg (strain SL476).